The primary structure comprises 245 residues: 1-(5-phosphoribosyl)-5-[(5-phosphoribosylamino)methylideneamino] imidazole-4-carboxamide isomerase (245 aa).

Catalysis depends on aspartate 8, which acts as the Proton acceptor. Residue aspartate 130 is the Proton donor of the active site.

It belongs to the HisA/HisF family.

Its subcellular location is the cytoplasm. It catalyses the reaction 1-(5-phospho-beta-D-ribosyl)-5-[(5-phospho-beta-D-ribosylamino)methylideneamino]imidazole-4-carboxamide = 5-[(5-phospho-1-deoxy-D-ribulos-1-ylimino)methylamino]-1-(5-phospho-beta-D-ribosyl)imidazole-4-carboxamide. The protein operates within amino-acid biosynthesis; L-histidine biosynthesis; L-histidine from 5-phospho-alpha-D-ribose 1-diphosphate: step 4/9. This Pseudomonas aeruginosa (strain LESB58) protein is 1-(5-phosphoribosyl)-5-[(5-phosphoribosylamino)methylideneamino] imidazole-4-carboxamide isomerase.